We begin with the raw amino-acid sequence, 184 residues long: Ribosome-recycling factor (184 aa).

It belongs to the RRF family.

Its subcellular location is the cytoplasm. Functionally, responsible for the release of ribosomes from messenger RNA at the termination of protein biosynthesis. May increase the efficiency of translation by recycling ribosomes from one round of translation to another. This is Ribosome-recycling factor from Borrelia hermsii (strain HS1 / DAH).